A 156-amino-acid chain; its full sequence is Ribosome maturation factor RimP (156 aa).

This sequence belongs to the RimP family.

The protein localises to the cytoplasm. In terms of biological role, required for maturation of 30S ribosomal subunits. The protein is Ribosome maturation factor RimP of Shouchella clausii (strain KSM-K16) (Alkalihalobacillus clausii).